Consider the following 95-residue polypeptide: Cell division protein FtsB (95 aa).

Residues 1–3 (MKW) are Cytoplasmic-facing. Residues 4–21 (VTGLLVVLLLGLQYKLWI) form a helical membrane-spanning segment. Over 22–95 (GEGSVAEVWQ…QVVGRPGETP (74 aa)) the chain is Periplasmic. Residues 26–73 (VAEVWQLRQTLEAQRAENEELRYRNAALDAEVTDLKTGLDAIEERARR) are a coiled coil.

Belongs to the FtsB family. Part of a complex composed of FtsB, FtsL and FtsQ.

Its subcellular location is the cell inner membrane. Functionally, essential cell division protein. May link together the upstream cell division proteins, which are predominantly cytoplasmic, with the downstream cell division proteins, which are predominantly periplasmic. This is Cell division protein FtsB from Thioalkalivibrio sulfidiphilus (strain HL-EbGR7).